Reading from the N-terminus, the 74-residue chain is UPF0346 protein LCA_0996 (74 aa).

Belongs to the UPF0346 family.

The chain is UPF0346 protein LCA_0996 from Latilactobacillus sakei subsp. sakei (strain 23K) (Lactobacillus sakei subsp. sakei).